We begin with the raw amino-acid sequence, 1064 residues long: Serine/threonine protein kinase KIN1 (1064 aa).

The disordered stretch occupies residues 1-113 (MDDYHVNTAF…SSQGMPKQFH (113 aa)). Positions 8 to 36 (TAFSMGRGNQQDDGNSESNSMHTQPSTMA) are enriched in polar residues. Basic and acidic residues predominate over residues 74-91 (AEQKERQVELEGKSRENA). Residues 93–108 (KPNTTSQSRVSSSQGM) show a composition bias toward polar residues. One can recognise a Protein kinase domain in the interval 120 to 398 (WEFVETVGAG…LKQVVEHHWM (279 aa)). ATP-binding positions include 126 to 134 (VGAGSMGKV) and Lys149. Catalysis depends on Asp269, which acts as the Proton acceptor. Ser534 is subject to Phosphoserine. Residues 549-621 (SEPEATLATK…SPTPQGNDYQ (73 aa)) form a disordered region. The segment covering 557 to 571 (TKDTSVPFTPKNSDG) has biased composition (polar residues). Ser593 is subject to Phosphoserine. Over residues 598–608 (KSSDNQRREME) the composition is skewed to basic and acidic residues. Ser646 carries the post-translational modification Phosphoserine. Disordered regions lie at residues 652–672 (TIEQ…QKTH), 694–714 (MNEP…FPAL), 762–797 (EGSD…HARR), 823–843 (LESS…QTND), and 958–1016 (HESI…GMTT). Polar residues predominate over residues 654–670 (EQTSVNSNNSINKPVQK). At Ser764 the chain carries Phosphoserine. Residues 779 to 794 (KGRKLHPSARAKSVGH) show a composition bias toward basic residues. 3 stretches are compositionally biased toward polar residues: residues 832–843 (DSLGNVTSQTND), 963–989 (RQGS…SITE), and 998–1016 (GTSL…GMTT). A Phosphoserine modification is found at Ser986. One can recognise a KA1 domain in the interval 1015–1064 (TTTEKEPIKFEIHIVKVRIVGLAGVHFKKISGNTWLYKELASSILKELKL).

The protein belongs to the protein kinase superfamily. CAMK Ser/Thr protein kinase family. NIM1 subfamily. Interacts with SEC9 and SRO7. Autophosphorylated.

Its subcellular location is the cytoplasm. It localises to the cell membrane. The catalysed reaction is L-seryl-[protein] + ATP = O-phospho-L-seryl-[protein] + ADP + H(+). It carries out the reaction L-threonyl-[protein] + ATP = O-phospho-L-threonyl-[protein] + ADP + H(+). In terms of biological role, serine/threonine protein kinase involved in the regulation of exocytosis. Induces phosphorylation of SEC9 and its release from the plasma membrane to the cytosol. This Saccharomyces cerevisiae (strain ATCC 204508 / S288c) (Baker's yeast) protein is Serine/threonine protein kinase KIN1 (KIN1).